The chain runs to 290 residues: Glycine--tRNA ligase alpha subunit (290 aa).

The protein belongs to the class-II aminoacyl-tRNA synthetase family. Tetramer of two alpha and two beta subunits.

The protein resides in the cytoplasm. It catalyses the reaction tRNA(Gly) + glycine + ATP = glycyl-tRNA(Gly) + AMP + diphosphate. The protein is Glycine--tRNA ligase alpha subunit of Fusobacterium nucleatum subsp. nucleatum (strain ATCC 25586 / DSM 15643 / BCRC 10681 / CIP 101130 / JCM 8532 / KCTC 2640 / LMG 13131 / VPI 4355).